Reading from the N-terminus, the 430-residue chain is Tektin-2 (430 aa).

2 coiled-coil regions span residues 80-162 and 225-382; these read KCLT…FEQL and NKDR…CKAN.

This sequence belongs to the tektin family. As to quaternary structure, microtubule inner protein component of sperm flagellar doublet microtubules. May interact with CCDC172. Tyrosine phosphorylated. Post-translationally, ubiquitinated, leading to its degradation. Deubiquitinated by USP16, promoting its stability. As to expression, expressed at high levels in testis, trachea and fetal lung, and at lower levels in ovary, pituitary, adult lung, fetal brain and fetal kidney.

The protein resides in the cytoplasm. It localises to the cytoskeleton. The protein localises to the cilium axoneme. Its subcellular location is the flagellum axoneme. It is found in the microtubule organizing center. Its function is as follows. Microtubule inner protein (MIP) part of the dynein-decorated doublet microtubules (DMTs) in cilia and flagellar axoneme. Plays a key role in the assembly or attachment of the inner dynein arm to microtubules in sperm flagella and tracheal cilia. Forms filamentous polymers in the walls of ciliary and flagellar microtubules. This chain is Tektin-2, found in Homo sapiens (Human).